Reading from the N-terminus, the 730-residue chain is PWWP domain-containing protein 2A (730 aa).

A compositionally biased stretch (low complexity) spans M1–P15. The segment at M1–S134 is disordered. Positions P66 to G77 are enriched in pro residues. S82 and S99 each carry phosphoserine. Pro residues predominate over residues P91 to P108. Residues G128 to G346 form an interaction with HDAC1 and MTA1 region. K188 participates in a covalent cross-link: Glycyl lysine isopeptide (Lys-Gly) (interchain with G-Cter in SUMO2). 3 disordered regions span residues Y257–M276, I311–R355, and K409–K531. Residues R267–M276 show a composition bias toward basic residues. Composition is skewed to basic and acidic residues over residues I311–D329 and D341–R354. The interaction with the H2A.Z/H2AZ1 stretch occupies residues M396 to T547. Over residues S488–E501 the composition is skewed to low complexity. The segment covering D512–M527 has biased composition (basic and acidic residues). The PWWP domain maps to V630–N690.

As to quaternary structure, component of a MTA1-specific subcomplex of the NuRD complex (M1HR), which is composed of PWWP2A, MTA1/2, HDAC1/2, and RBBP4/7 but does not contain CHD4 and MBD3. Interacts with MTA1; the interaction mediates the association of PWWP2A with the M1HR complex. Interacts with H2A.Z/H2AZ1. Interacts (via PWWP domain) with histone H3 trimethylated at 'Lys-36' (H3K36me3). Does not interact with CHD4 and MBD3.

The protein resides in the nucleus. In terms of biological role, chromatin-binding protein that acts as an adapter between distinct nucleosome components (H3K36me3 or H2A.Z) and chromatin-modifying complexes, contributing to the regulation of the levels of histone acetylation at actively transcribed genes. Competes with CHD4 and MBD3 for interaction with MTA1 to form a NuRD subcomplex, preventing the formation of full NuRD complex (containing CHD4 and MBD3), leading to recruitment of HDACs to gene promoters resulting in turn in the deacetylation of nearby H3K27 and H2A.Z. Plays a role in facilitating transcriptional elongation and repression of spurious transcription initiation through regulation of histone acetylation. Essential for proper mitosis progression. The polypeptide is PWWP domain-containing protein 2A (Pwwp2a) (Mus musculus (Mouse)).